The sequence spans 146 residues: Protein SprT-like (146 aa).

Residues 4-142 (NEYVKQVSLE…GRCKGKLRLL (139 aa)) enclose the SprT-like domain. Histidine 64 is a Zn(2+) binding site. The active site involves glutamate 65. Histidine 68 is a binding site for Zn(2+).

This sequence belongs to the SprT family. Zn(2+) is required as a cofactor.

The protein resides in the cytoplasm. This chain is Protein SprT-like, found in Streptococcus gordonii (strain Challis / ATCC 35105 / BCRC 15272 / CH1 / DL1 / V288).